The primary structure comprises 283 residues: ATP synthase gamma chain (283 aa).

Belongs to the ATPase gamma chain family. As to quaternary structure, F-type ATPases have 2 components, CF(1) - the catalytic core - and CF(0) - the membrane proton channel. CF(1) has five subunits: alpha(3), beta(3), gamma(1), delta(1), epsilon(1). CF(0) has three main subunits: a, b and c.

The protein localises to the cell membrane. In terms of biological role, produces ATP from ADP in the presence of a proton gradient across the membrane. The gamma chain is believed to be important in regulating ATPase activity and the flow of protons through the CF(0) complex. This chain is ATP synthase gamma chain, found in Clostridium botulinum (strain Eklund 17B / Type B).